We begin with the raw amino-acid sequence, 319 residues long: Beta-ketoacyl-[acyl-carrier-protein] synthase III (319 aa).

Residues Cys113 and His246 contribute to the active site. Positions 247–251 are ACP-binding; sequence QANRR. The active site involves Asn276.

The protein belongs to the thiolase-like superfamily. FabH family. As to quaternary structure, homodimer.

The protein localises to the cytoplasm. The catalysed reaction is malonyl-[ACP] + acetyl-CoA + H(+) = 3-oxobutanoyl-[ACP] + CO2 + CoA. It functions in the pathway lipid metabolism; fatty acid biosynthesis. Catalyzes the condensation reaction of fatty acid synthesis by the addition to an acyl acceptor of two carbons from malonyl-ACP. Catalyzes the first condensation reaction which initiates fatty acid synthesis and may therefore play a role in governing the total rate of fatty acid production. Possesses both acetoacetyl-ACP synthase and acetyl transacylase activities. Its substrate specificity determines the biosynthesis of branched-chain and/or straight-chain of fatty acids. This chain is Beta-ketoacyl-[acyl-carrier-protein] synthase III, found in Rhizorhabdus wittichii (strain DSM 6014 / CCUG 31198 / JCM 15750 / NBRC 105917 / EY 4224 / RW1) (Sphingomonas wittichii).